A 377-amino-acid chain; its full sequence is Chaperone protein DnaJ (377 aa).

The J domain maps to 5–70; that stretch reads DYYQVLGVSR…KKRSAYDQLG (66 aa). The segment at 138-216 adopts a CR-type zinc-finger fold; sequence GVTKIISFKT…CYGEGRYINT (79 aa). Zn(2+)-binding residues include cysteine 151, cysteine 154, cysteine 168, cysteine 171, cysteine 190, cysteine 193, cysteine 204, and cysteine 207. CXXCXGXG motif repeat units lie at residues 151–158, 168–175, 190–197, and 204–211; these read CEACTGKG, CPTCRGSG, CQTCRGAG, and CTKCYGEG.

This sequence belongs to the DnaJ family. As to quaternary structure, homodimer. Requires Zn(2+) as cofactor.

It localises to the cytoplasm. Its function is as follows. Participates actively in the response to hyperosmotic and heat shock by preventing the aggregation of stress-denatured proteins and by disaggregating proteins, also in an autonomous, DnaK-independent fashion. Unfolded proteins bind initially to DnaJ; upon interaction with the DnaJ-bound protein, DnaK hydrolyzes its bound ATP, resulting in the formation of a stable complex. GrpE releases ADP from DnaK; ATP binding to DnaK triggers the release of the substrate protein, thus completing the reaction cycle. Several rounds of ATP-dependent interactions between DnaJ, DnaK and GrpE are required for fully efficient folding. Also involved, together with DnaK and GrpE, in the DNA replication of plasmids through activation of initiation proteins. The polypeptide is Chaperone protein DnaJ (Orientia tsutsugamushi (strain Ikeda) (Rickettsia tsutsugamushi)).